The sequence spans 806 residues: Leucine--tRNA ligase (806 aa).

The short motif at 40–51 is the 'HIGH' region element; it reads PYPSGAGLHVGH. The short motif at 576–580 is the 'KMSKS' region element; sequence KMSKS. Lysine 579 contributes to the ATP binding site.

It belongs to the class-I aminoacyl-tRNA synthetase family.

It localises to the cytoplasm. The catalysed reaction is tRNA(Leu) + L-leucine + ATP = L-leucyl-tRNA(Leu) + AMP + diphosphate. This is Leucine--tRNA ligase from Halalkalibacterium halodurans (strain ATCC BAA-125 / DSM 18197 / FERM 7344 / JCM 9153 / C-125) (Bacillus halodurans).